The primary structure comprises 156 residues: Putative pre-16S rRNA nuclease (156 aa).

This sequence belongs to the YqgF nuclease family.

Its subcellular location is the cytoplasm. In terms of biological role, could be a nuclease involved in processing of the 5'-end of pre-16S rRNA. In Ehrlichia ruminantium (strain Welgevonden), this protein is Putative pre-16S rRNA nuclease.